The chain runs to 293 residues: Probable 2-(5''-triphosphoribosyl)-3'-dephosphocoenzyme-A synthase (293 aa).

Belongs to the CitG/MdcB family.

The catalysed reaction is 3'-dephospho-CoA + ATP = 2'-(5''-triphospho-alpha-D-ribosyl)-3'-dephospho-CoA + adenine. Involved in the formation of 2-(5''-phosphoribosyl)-3'-dephosphocoenzyme-A, the prosthetic group of the acyl-carrier protein of the malonate decarboxylase. This chain is Probable 2-(5''-triphosphoribosyl)-3'-dephosphocoenzyme-A synthase, found in Pseudomonas aeruginosa (strain UCBPP-PA14).